A 980-amino-acid chain; its full sequence is Probable outer membrane protein PmpH (980 aa).

Positions 1–24 are cleaved as a signal peptide; that stretch reads MPFSLRSTSFCFLACLCSYSYGLA. The Autotransporter domain maps to 661-980; that stretch reads GELVPNSLWV…FVSLGLNRIF (320 aa).

The protein belongs to the PMP outer membrane protein family.

It is found in the secreted. It localises to the cell wall. The protein resides in the cell outer membrane. The chain is Probable outer membrane protein PmpH (pmpH) from Chlamydia muridarum (strain MoPn / Nigg).